The chain runs to 588 residues: MFRVAIPRSALNLHSCLLHVTLSLVLISKAAITTAGNEDSDVREARSVSDQQVVHPVDCVISDWSAWSRCDTCQKKRYRYAKLDQPSQFGGEPCHFHDMEDEACDVPDRYTCDSIPLCEGFLCTQTGRCIHRTLQCNGEDDCGDMSDEVGCKKVPKPCRQEAEEYWGIENLAKGINILNSNLEGLVLDNRYYAGSCLPQYIQDVRFRKPHNLQQYTLETKGSYDFNVQSFESYSDYMDYSMRERMTQTIVSIGFAIPGIAEFGFNYNNAKVTRSIQKIRRASSKINSFVSAKAELELAQYMLRSDDLMLHPEFLQRLRSLPQAYVYGEYRQIYRDYGTHYITEAALGGEYEHTIILDKEKLAKTDYSLEDYKSCTQAGLKIGANIYGVYVSAGIEGGSCNGLLNEMGEDTAIGSSVEDFVAVVRGGSSESITGLVSKKLPTPQLMRLWGEGVRFNPDFIRKTTRPLYELVTSKDFSHDATLKRNLKRALSEYLAESSSCRCAPCHNNGVAVLRGTRCDCVCPTGYTGRGCEITQRKKQIATDGSWSCWGAWSSCSGRKMSRSRQCNNPVPSDGGLACRGLQQESTDCF.

Positions methionine 1–alanine 30 are cleaved as a signal peptide. The propeptide occupies alanine 31–arginine 46. Residues aspartate 58–aspartate 113 form the TSP type-1 1 domain. 7 cysteine pairs are disulfide-bonded: cysteine 59–cysteine 94, cysteine 70–cysteine 104, cysteine 73–cysteine 112, cysteine 118–cysteine 129, cysteine 123–cysteine 142, cysteine 136–cysteine 151, and cysteine 158–cysteine 196. 2 C-linked (Man) tryptophan glycosylation sites follow: tryptophan 64 and tryptophan 67. The 38-residue stretch at isoleucine 115 to lysine 152 folds into the LDL-receptor class A domain. The Ca(2+) site is built by leucine 134, asparagine 137, glutamate 139, aspartate 141, aspartate 147, and glutamate 148. The MACPF domain occupies valine 154–arginine 500. 4 beta stranded membrane-spanning segments follow: residues threonine 248–alanine 255, glycine 258–asparagine 265, threonine 375–glycine 382, and valine 388–glutamate 395. 5 cysteine pairs are disulfide-bonded: cysteine 374-cysteine 399, cysteine 499-cysteine 547, cysteine 501-cysteine 517, cysteine 504-cysteine 519, and cysteine 521-cysteine 530. One can recognise an EGF-like domain in the interval cysteine 501–glutamate 531. One can recognise a TSP type-1 2 domain in the interval aspartate 542–phenylalanine 588. Tryptophan 548 and tryptophan 551 each carry a C-linked (Man) tryptophan glycan. Cysteine 554 and cysteine 587 form a disulfide bridge.

This sequence belongs to the complement C6/C7/C8/C9 family. In terms of assembly, heterotrimer of 3 chains: alpha (C8A), beta (C8B) and gamma (C8G); the alpha and gamma chains are disulfide bonded. Component of the membrane attack complex (MAC), composed of complement C5b, C6, C7, C8A, C8B, C8G and multiple copies of the pore-forming subunit C9.

The protein resides in the secreted. The protein localises to the target cell membrane. Functionally, component of the membrane attack complex (MAC), a multiprotein complex activated by the complement cascade, which inserts into a target cell membrane and forms a pore, leading to target cell membrane rupture and cell lysis. The MAC is initiated by proteolytic cleavage of C5 into complement C5b in response to the classical, alternative, lectin and GZMK complement pathways. The complement pathways consist in a cascade of proteins that leads to phagocytosis and breakdown of pathogens and signaling that strengthens the adaptive immune system. C8B, together with C8A and C8G, inserts into the target membrane, but does not form pores by itself. During MAC assembly, associates with C5b, C6 and C7 to form the C5b8 intermediate complex that inserts into the target membrane and traverses the bilayer increasing membrane rigidity. The sequence is that of Complement component C8 beta chain (c8b) from Paralichthys olivaceus (Bastard halibut).